The following is a 285-amino-acid chain: Aldo-keto reductase (285 aa).

165–175 contributes to the NADP(+) binding site; that stretch reads APLAGGILTGK.

This sequence belongs to the aldo/keto reductase family. Aldo/keto reductase 2 subfamily.

In Babesia bovis, this protein is Aldo-keto reductase.